Here is a 575-residue protein sequence, read N- to C-terminus: Urease subunit alpha (575 aa).

One can recognise a Urease domain in the interval 138-575 (GAVDCHVHLI…LPMTQRYFLF (438 aa)). 3 residues coordinate Ni(2+): His-143, His-145, and Lys-226. Lys-226 carries the post-translational modification N6-carboxylysine. His-228 is a binding site for substrate. Residues His-255 and His-281 each coordinate Ni(2+). His-329 serves as the catalytic Proton donor. Asp-369 contacts Ni(2+).

The protein belongs to the metallo-dependent hydrolases superfamily. Urease alpha subunit family. In terms of assembly, heterotrimer of UreA (gamma), UreB (beta) and UreC (alpha) subunits. Three heterotrimers associate to form the active enzyme. The cofactor is Ni cation. In terms of processing, carboxylation allows a single lysine to coordinate two nickel ions.

The protein localises to the cytoplasm. It carries out the reaction urea + 2 H2O + H(+) = hydrogencarbonate + 2 NH4(+). Its pathway is nitrogen metabolism; urea degradation; CO(2) and NH(3) from urea (urease route): step 1/1. In Frankia casuarinae (strain DSM 45818 / CECT 9043 / HFP020203 / CcI3), this protein is Urease subunit alpha.